A 550-amino-acid chain; its full sequence is Medium/long-chain-fatty-acid--CoA/3-oxocholest-4-en-26-oate--CoA ligase (550 aa).

ATP contacts are provided by residues 178-186 (TGGTTGFPK), Asp-419, Arg-434, and Lys-525. The tract at residues 525-550 (KPDYRWAKEQTEARPADDVHAAHVSA) is disordered.

It belongs to the ATP-dependent AMP-binding enzyme family.

The catalysed reaction is a medium-chain fatty acid + ATP + CoA = a medium-chain fatty acyl-CoA + AMP + diphosphate. It carries out the reaction a long-chain fatty acid + ATP + CoA = a long-chain fatty acyl-CoA + AMP + diphosphate. The enzyme catalyses (25S)-3-oxocholest-4-en-26-oate + ATP + CoA = (25S)-3-oxocholest-4-en-26-oyl-CoA + AMP + diphosphate. It participates in lipid metabolism; fatty acid biosynthesis. Its pathway is steroid metabolism; cholesterol metabolism. In terms of biological role, catalyzes the activation of medium/long-chain fatty acids as acyl-coenzyme A (acyl-CoA), which are then transferred to the multifunctional polyketide synthase (PKS) type III for further chain extension. Also involved in the degradation of cholesterol via the degradation of the side chains of C-24 branched-chain sterols. Catalyzes the ATP-dependent CoA thioesterification of the sterol 3-oxocholest-4-en-26-oate to yield 3-oxocholest-4-en-26-oyl-CoA. The protein is Medium/long-chain-fatty-acid--CoA/3-oxocholest-4-en-26-oate--CoA ligase of Mycobacterium marinum (strain ATCC BAA-535 / M).